A 132-amino-acid chain; its full sequence is UPF0251 protein PTH_0588 (132 aa).

Belongs to the UPF0251 family.

The polypeptide is UPF0251 protein PTH_0588 (Pelotomaculum thermopropionicum (strain DSM 13744 / JCM 10971 / SI)).